A 387-amino-acid chain; its full sequence is Transmembrane protein 120 homolog (387 aa).

The stretch at Met-1–Gln-39 forms a coiled coil. Asn-111 carries N-linked (GlcNAc...) asparagine glycosylation. 6 helical membrane passes run Phe-130–Tyr-150, Leu-155–Leu-175, Phe-191–Ile-211, Phe-216–Leu-238, Gly-264–Trp-284, and Val-302–Val-322. The tract at residues Arg-346–Thr-387 is disordered. A phosphoserine mark is found at Ser-352, Ser-354, and Ser-365. The span at Ser-352–Pro-381 shows a compositional bias: low complexity.

Belongs to the TMEM120 family.

It localises to the membrane. This chain is Transmembrane protein 120 homolog, found in Drosophila melanogaster (Fruit fly).